We begin with the raw amino-acid sequence, 274 residues long: NH(3)-dependent NAD(+) synthetase (274 aa).

46–53 (GISGGQDS) contributes to the ATP binding site. Residue aspartate 52 coordinates Mg(2+). Arginine 140 is a deamido-NAD(+) binding site. ATP is bound at residue threonine 160. Mg(2+) is bound at residue glutamate 165. Residues lysine 173 and aspartate 180 each contribute to the deamido-NAD(+) site. ATP is bound by residues lysine 189 and threonine 211. 260 to 261 (HK) is a binding site for deamido-NAD(+).

The protein belongs to the NAD synthetase family. Homodimer.

The enzyme catalyses deamido-NAD(+) + NH4(+) + ATP = AMP + diphosphate + NAD(+) + H(+). It participates in cofactor biosynthesis; NAD(+) biosynthesis; NAD(+) from deamido-NAD(+) (ammonia route): step 1/1. Functionally, catalyzes the ATP-dependent amidation of deamido-NAD to form NAD. Uses ammonia as a nitrogen source. This Streptococcus sanguinis (strain SK36) protein is NH(3)-dependent NAD(+) synthetase.